The following is a 152-amino-acid chain: UPF0225 protein YchJ (152 aa).

Belongs to the UPF0225 family.

The chain is UPF0225 protein YchJ (ychJ) from Salmonella typhimurium (strain LT2 / SGSC1412 / ATCC 700720).